Consider the following 161-residue polypeptide: MRLGSRLAVDVGKARIGLARSDPHGLIATPVETVPRDPAGSADVRRILAVATEIDCAELVVGLPLALSGRATASTDDAEGFARRLADATEIPVRLVDERLSTVSAQGALRASGRGSRKQKPVIDQVAAVIILQHALETERAAGSPPGALVPRNRVDPDRHA.

The segment at 141–161 is disordered; the sequence is AAGSPPGALVPRNRVDPDRHA.

The protein belongs to the YqgF nuclease family.

Its subcellular location is the cytoplasm. In terms of biological role, could be a nuclease involved in processing of the 5'-end of pre-16S rRNA. The protein is Putative pre-16S rRNA nuclease of Clavibacter michiganensis subsp. michiganensis (strain NCPPB 382).